Here is a 386-residue protein sequence, read N- to C-terminus: MNIHEYQAKEILRKYGVPTSTGLVVTKTEKINETIDKLNTEVYVVKAQIHAGGRGKAGGVKVVKSKEEAKKVAHDMFGINLVTHQTEPQGQKVNCLYIESGCDILKEYYFSIVFDRSASCITFIASTEGGVDIEEVAAKTPAKIIKFSVDPATGLQDFHMRGIAYELGFKDNQAKQMKEIVKSVYNAFVETDAAQIEINPLIVQTDGNLLALDAKITFDDNGLFKHPNITAMRDHDEEDPLETRAANAGLSYVKMGGNIGCMVNGAGLAMATMDIIKLYGASPANFLDVGGGADRERVKEALKIILSDKEVQGILVNIFGGIMRCDIIAEGIIAAAKDIGIKVPLVVRLAGTNVEKGEEILSNSGLDIIPAHDLADAANKIVAAIR.

Residues 9 to 244 (KEILRKYGVP…HDEEDPLETR (236 aa)) enclose the ATP-grasp domain. Residues K46, 53-55 (GRG), E99, C102, and E107 each bind ATP. Mg(2+)-binding residues include N199 and D213. Residues N264 and 321–323 (GIM) contribute to the substrate site.

This sequence belongs to the succinate/malate CoA ligase beta subunit family. In terms of assembly, heterotetramer of two alpha and two beta subunits. Mg(2+) is required as a cofactor.

It carries out the reaction succinate + ATP + CoA = succinyl-CoA + ADP + phosphate. It catalyses the reaction GTP + succinate + CoA = succinyl-CoA + GDP + phosphate. Its pathway is carbohydrate metabolism; tricarboxylic acid cycle; succinate from succinyl-CoA (ligase route): step 1/1. Functionally, succinyl-CoA synthetase functions in the citric acid cycle (TCA), coupling the hydrolysis of succinyl-CoA to the synthesis of either ATP or GTP and thus represents the only step of substrate-level phosphorylation in the TCA. The beta subunit provides nucleotide specificity of the enzyme and binds the substrate succinate, while the binding sites for coenzyme A and phosphate are found in the alpha subunit. This Rickettsia akari (strain Hartford) protein is Succinate--CoA ligase [ADP-forming] subunit beta.